Here is a 364-residue protein sequence, read N- to C-terminus: Esculetin O-methyltransferase (364 aa).

Asparagine 132 serves as a coordination point for bergaptol. S-adenosyl-L-homocysteine contacts are provided by glycine 209, aspartate 232, aspartate 252, methionine 253, methionine 265, and lysine 266. Bergaptol is bound at residue histidine 270. Histidine 270 (proton acceptor) is an active-site residue.

This sequence belongs to the class I-like SAM-binding methyltransferase superfamily. Cation-independent O-methyltransferase family. COMT subfamily. In terms of assembly, homodimer. In terms of tissue distribution, expressed ubiquitously.

It carries out the reaction bergaptol + S-adenosyl-L-methionine = bergapten + S-adenosyl-L-homocysteine. The catalysed reaction is xanthotoxol + S-adenosyl-L-methionine = xanthotoxin + S-adenosyl-L-homocysteine + H(+). It catalyses the reaction esculetin + S-adenosyl-L-methionine = isoscopoletin + S-adenosyl-L-homocysteine + H(+). The enzyme catalyses esculetin + S-adenosyl-L-methionine = scopoletin + S-adenosyl-L-homocysteine + H(+). It functions in the pathway aromatic compound metabolism. The protein operates within secondary metabolite biosynthesis. Its activity is regulated as follows. Inhibited by zinc Zn(2+), copper Cu(2+) and silver Ag(+) ions. O-methyltransferase involved in the biosynthesis of methoxylated coumarins natural products such as isoscopoletin, scopoletin, xanthotoxin and bergapten, photosensitizers used for medical purpose such as treating psoriasis and vitiligo or facilitating resistance to microbial infection and other stresses. Catalyzes the methylation of esculetin, bergaptol and xanthotoxol, but seems inactive on scopoletin and isoscopoletin. This chain is Esculetin O-methyltransferase, found in Kitagawia praeruptora (Peucedanum praeruptorum).